The primary structure comprises 526 residues: Calcium-dependent protein kinase 28 (526 aa).

The interval 1–37 is disordered; it reads MQPDPQPHGRGREKAAGAGPRLPPPVTAPSVGRPASV. The 259-residue stretch at 49-307 folds into the Protein kinase domain; the sequence is YRIGKKLGQG…AHEVLCHPWI (259 aa). ATP is bound by residues 55–63 and Lys78; that span reads LGQGQFGTT. Catalysis depends on Asp173, which acts as the Proton acceptor. An autoinhibitory domain region spans residues 313–343; sequence APDKPIDSAVLSRLKHFSAMNKLKKMALRVI. EF-hand domains lie at 350-385, 386-421, 422-457, and 460-491; these read EEIG…VGSD, LMEP…MNKL, EREE…FGLS, and HLED…GNAG. Ca(2+) contacts are provided by Asp363, Asp365, Ser367, Thr369, Glu374, Asp399, Asp401, Ser403, Thr405, Glu410, Asp435, Asp437, Ser439, Glu446, Asp469, Asn471, Asp473, Gln475, and Glu480.

This sequence belongs to the protein kinase superfamily. Ser/Thr protein kinase family. CDPK subfamily.

It catalyses the reaction L-seryl-[protein] + ATP = O-phospho-L-seryl-[protein] + ADP + H(+). The catalysed reaction is L-threonyl-[protein] + ATP = O-phospho-L-threonyl-[protein] + ADP + H(+). With respect to regulation, activated by calcium. Autophosphorylation may play an important role in the regulation of the kinase activity. In terms of biological role, may play a role in signal transduction pathways that involve calcium as a second messenger. This is Calcium-dependent protein kinase 28 from Oryza sativa subsp. japonica (Rice).